The primary structure comprises 105 residues: Putative regulatory protein COPRO5265_1186 (105 aa).

Positions 76 to 105 (RLEEEEEEEERTEPITEQEAELEEESGEDV) are disordered. Acidic residues predominate over residues 78–105 (EEEEEEEERTEPITEQEAELEEESGEDV).

Belongs to the RemA family.

In Coprothermobacter proteolyticus (strain ATCC 35245 / DSM 5265 / OCM 4 / BT), this protein is Putative regulatory protein COPRO5265_1186.